The chain runs to 651 residues: Tudor domain-containing protein 3 (651 aa).

The disordered stretch occupies residues 147-189 (TKTFGGGGGGVRSHLNIGAGGHRNREVSQKEKASKSESKNEGV). The segment covering 169–189 (RNREVSQKEKASKSESKNEGV) has biased composition (basic and acidic residues). One can recognise a UBA domain in the interval 193-233 (LVDEKALKHITEMGFSKEASRQALMDNANNLEAALNVLLNS). Disordered stretches follow at residues 234–272 (SKQKPVVGPPPRGRGKGRGRVRSEDEEDLGNARPSAPST), 306–371 (TEQN…DVWA), and 384–459 (YDRT…RKSR). Residue S256 is modified to Phosphoserine. The span at 321-338 (PRNDPRQPRNEKPPRFQR) shows a compositional bias: basic and acidic residues. Over residues 339-352 (DTPNLKSALENSVL) the composition is skewed to polar residues. S345 bears the Phosphoserine mark. K470 is covalently cross-linked (Glycyl lysine isopeptide (Lys-Gly) (interchain with G-Cter in SUMO2)). A Tudor domain is found at 555–615 (MWKPGDECFA…KPVQTEAWEE (61 aa)). Residues 624 to 633 (EFRRGGDGQP) are compositionally biased toward basic and acidic residues. The tract at residues 624–651 (EFRRGGDGQPRRSTRPTQQFYQPPRARN) is disordered. The segment at 631 to 651 (GQPRRSTRPTQQFYQPPRARN) is EBM motif; may mediate interaction with the EJC.

As to quaternary structure, component of mRNA stress granules. Interacts with FMR1, FXR1, FXR2, EWSR1, FUS, SERBP1, EEF1A1 and DDX3X or DDX3Y, and with the small nuclear ribonucleoprotein-associated proteins SNRPB and SNRPN. Interacts with 'Lys-48'-linked tetra-ubiquitin, but not with monoubiquitin or 'Lys-63'-linked ubiquitin chains. May interact with the exon junction complex (EJC) composed at least of CASC3, EIF4A3, MAGOH and RBM8A. Interacts with POLR2A (via the C-terminal domain (CTD)).

The protein localises to the cytoplasm. It localises to the nucleus. Its function is as follows. Scaffolding protein that specifically recognizes and binds dimethylarginine-containing proteins. Plays a role in the regulation of translation of target mRNAs by binding Arg/Gly-rich motifs (GAR) in dimethylarginine-containing proteins. In nucleus, acts as a coactivator: recognizes and binds asymmetric dimethylation on the core histone tails associated with transcriptional activation (H3R17me2a and H4R3me2a) and recruits proteins at these arginine-methylated loci. In cytoplasm, acts as an antiviral factor that participates in the assembly of stress granules together with G3BP1. In Rattus norvegicus (Rat), this protein is Tudor domain-containing protein 3 (Tdrd3).